Reading from the N-terminus, the 273-residue chain is Ribosomal RNA small subunit methyltransferase A (273 aa).

S-adenosyl-L-methionine-binding residues include asparagine 18, leucine 20, glycine 45, glutamate 66, aspartate 91, and asparagine 113.

It belongs to the class I-like SAM-binding methyltransferase superfamily. rRNA adenine N(6)-methyltransferase family. RsmA subfamily.

The protein resides in the cytoplasm. The enzyme catalyses adenosine(1518)/adenosine(1519) in 16S rRNA + 4 S-adenosyl-L-methionine = N(6)-dimethyladenosine(1518)/N(6)-dimethyladenosine(1519) in 16S rRNA + 4 S-adenosyl-L-homocysteine + 4 H(+). Specifically dimethylates two adjacent adenosines (A1518 and A1519) in the loop of a conserved hairpin near the 3'-end of 16S rRNA in the 30S particle. May play a critical role in biogenesis of 30S subunits. The chain is Ribosomal RNA small subunit methyltransferase A from Escherichia coli (strain 55989 / EAEC).